Consider the following 185-residue polypeptide: Photosystem I assembly protein Ycf4 (185 aa).

2 consecutive transmembrane segments (helical) span residues 20-40 and 57-77; these read GNFF…AVGA and ILFF…LFIS.

This sequence belongs to the Ycf4 family.

Its subcellular location is the plastid. It localises to the chloroplast thylakoid membrane. In terms of biological role, seems to be required for the assembly of the photosystem I complex. The polypeptide is Photosystem I assembly protein Ycf4 (Sorghum bicolor (Sorghum)).